A 76-amino-acid polypeptide reads, in one-letter code: Exodeoxyribonuclease 7 small subunit (76 aa).

Belongs to the XseB family. As to quaternary structure, heterooligomer composed of large and small subunits.

The protein resides in the cytoplasm. It carries out the reaction Exonucleolytic cleavage in either 5'- to 3'- or 3'- to 5'-direction to yield nucleoside 5'-phosphates.. Functionally, bidirectionally degrades single-stranded DNA into large acid-insoluble oligonucleotides, which are then degraded further into small acid-soluble oligonucleotides. This is Exodeoxyribonuclease 7 small subunit from Legionella pneumophila subsp. pneumophila (strain Philadelphia 1 / ATCC 33152 / DSM 7513).